The following is a 492-amino-acid chain: Replication factor C large subunit (492 aa).

Position 46-53 (46-53 (GPPGSGKT)) interacts with ATP. Residues 445 to 492 (VIPKRPKISDNQISEILTKDNNPKDDVKKASKKPESTSKKQATLDKFF) form a disordered region. A compositionally biased stretch (basic and acidic residues) spans 461–482 (LTKDNNPKDDVKKASKKPESTS).

The protein belongs to the activator 1 small subunits family. RfcL subfamily. As to quaternary structure, heteromultimer composed of small subunits (RfcS) and large subunits (RfcL).

Functionally, part of the RFC clamp loader complex which loads the PCNA sliding clamp onto DNA. The chain is Replication factor C large subunit from Methanococcus vannielii (strain ATCC 35089 / DSM 1224 / JCM 13029 / OCM 148 / SB).